The primary structure comprises 203 residues: V-type ATP synthase subunit D (203 aa).

The protein belongs to the V-ATPase D subunit family.

In terms of biological role, produces ATP from ADP in the presence of a proton gradient across the membrane. The chain is V-type ATP synthase subunit D from Streptococcus pneumoniae (strain Hungary19A-6).